The following is a 544-amino-acid chain: Ell-associated factor Eaf (544 aa).

The tract at residues 147–544 (QSVPMNMGHQ…LSSNSSDDDD (398 aa)) is disordered. Positions 193-202 (SSKDKVDFKP) are enriched in basic and acidic residues. The residue at position 205 (Ser205) is a Phosphoserine. The span at 264–273 (SGSSTGSSSG) shows a compositional bias: low complexity. The segment covering 287–299 (GKQRQAHGKRQQI) has biased composition (basic residues). 3 stretches are compositionally biased toward low complexity: residues 305-319 (PPVQ…QQQP), 333-374 (QPHP…QQRP), and 396-407 (ASQSVAQAAAVL). The span at 425–440 (DSSDSDSGSDSDDSTE) shows a compositional bias: acidic residues. Composition is skewed to low complexity over residues 450-483 (EQQQ…HMNQ), 503-513 (QQPQPQPQQQQ), and 526-544 (NDLL…DDDD).

It belongs to the EAF family.

It localises to the nucleus. Promotes transcriptional elongation by Su(Tpl)/ELL. Essential for development. The sequence is that of Ell-associated factor Eaf from Drosophila persimilis (Fruit fly).